A 175-amino-acid chain; its full sequence is Bcl-2-related protein A1 (175 aa).

Residues 77–97 carry the BH1 motif; sequence KEFEDGIINWGRIVTIFAFEG. The BH2 motif lies at 132-147; the sequence is EWIRQNGGWENGFVKK.

Belongs to the Bcl-2 family. As to quaternary structure, interacts directly with BAK1, BID, BMF and BBC3. Interacts directly with BCL2L11/BIM. Interacts with BAX isoform Sigma. Interacts directly with PMAIP1. Interacts with RTL10/BOP. Interacts with ING4. Interacts with UBQLN4. Seems to be restricted to the hematopoietic compartment. Expressed in peripheral blood, spleen, and bone marrow, at moderate levels in lung, small intestine and testis, at a minimal levels in other tissues. Also found in vascular smooth muscle cells and hematopoietic malignancies.

It is found in the cytoplasm. Retards apoptosis induced by IL-3 deprivation. May function in the response of hemopoietic cells to external signals and in maintaining endothelial survival during infection. Can inhibit apoptosis induced by serum starvation in the mammary epithelial cell line HC11. This chain is Bcl-2-related protein A1 (BCL2A1), found in Homo sapiens (Human).